The primary structure comprises 89 residues: Cell division topological specificity factor (89 aa).

This sequence belongs to the MinE family.

Its function is as follows. Prevents the cell division inhibition by proteins MinC and MinD at internal division sites while permitting inhibition at polar sites. This ensures cell division at the proper site by restricting the formation of a division septum at the midpoint of the long axis of the cell. This Edwardsiella ictaluri (strain 93-146) protein is Cell division topological specificity factor.